The primary structure comprises 156 residues: SsrA-binding protein (156 aa).

This sequence belongs to the SmpB family.

The protein localises to the cytoplasm. Its function is as follows. Required for rescue of stalled ribosomes mediated by trans-translation. Binds to transfer-messenger RNA (tmRNA), required for stable association of tmRNA with ribosomes. tmRNA and SmpB together mimic tRNA shape, replacing the anticodon stem-loop with SmpB. tmRNA is encoded by the ssrA gene; the 2 termini fold to resemble tRNA(Ala) and it encodes a 'tag peptide', a short internal open reading frame. During trans-translation Ala-aminoacylated tmRNA acts like a tRNA, entering the A-site of stalled ribosomes, displacing the stalled mRNA. The ribosome then switches to translate the ORF on the tmRNA; the nascent peptide is terminated with the 'tag peptide' encoded by the tmRNA and targeted for degradation. The ribosome is freed to recommence translation, which seems to be the essential function of trans-translation. This is SsrA-binding protein from Shouchella clausii (strain KSM-K16) (Alkalihalobacillus clausii).